Consider the following 211-residue polypeptide: Homeobox protein Rhox5 (211 aa).

Residues Phe-38 to Arg-129 are disordered. 2 stretches are compositionally biased toward gly residues: residues Gly-52 to Glu-62 and Gly-70 to Gly-84. A compositionally biased stretch (basic and acidic residues) spans His-102–Met-119. A DNA-binding region (homeobox; atypical) is located at residues Met-119–Arg-176.

As to expression, highly expressed in placenta. Lower levels in testis, epididymis, ovary and skeletal muscle.

Its subcellular location is the nucleus. Its function is as follows. Transcription factor required for differentiation of embryonic stem cells (ESCs) into primordial germ cells. The chain is Homeobox protein Rhox5 (Rhox5) from Rattus norvegicus (Rat).